We begin with the raw amino-acid sequence, 422 residues long: Testin (422 aa).

The region spanning 92 to 199 is the PET domain; the sequence is MILTSPVAAK…GDVKLPKEVE (108 aa). The tract at residues 135-165 is disordered; the sequence is QPVAGSEGAQYRKKQLAKQLPAHDQDPSKCH. Basic and acidic residues predominate over residues 155–165; that stretch reads PAHDQDPSKCH. LIM zinc-binding domains follow at residues 234 to 299, 300 to 359, and 360 to 422; these read YYCF…SEKP, RCAG…NHAV, and SCQG…KMSS.

This sequence belongs to the prickle / espinas / testin family. In terms of tissue distribution, expressed in the animal hemisphere at the 4-cell stage. By stage 18, expressed in cells adjacent to the anterior neural plate. In late neurula, expressed in the cranial neural crest. At tail bud stages, expressed strongly in the head, ventral to the developing eye, branchial arches and lateral line placodes. Also localized in the otic vesicle, dorsal fin and notochord with weaker expression at intersomitic junctions of tail bud embryos.

The protein localises to the cytoplasm. Its subcellular location is the cell cortex. The protein resides in the cell junction. It localises to the focal adhesion. Scaffold protein that may play a role in cell adhesion, cell spreading and in the reorganization of the actin cytoskeleton. May inhibit cell growth. Regulates cranial neural crest migration. Acts together with prickle1 to control axial elongation. The sequence is that of Testin from Xenopus laevis (African clawed frog).